The primary structure comprises 73 residues: Antitoxin VapB2 (73 aa).

In terms of assembly, forms a homodimer, which binds to a toxin homodimer, which then oligomerizes further to a hetero-octamer. When bound to toxin VapC2 the toxin activity is inhibited; 1 antitoxin may suffice to inhibit toxin.

Antitoxin component of a type II toxin-antitoxin (TA) system. Upon expression in M.smegmatis neutralizes the effect of cognate toxin VapC2. The C-terminal helix of the antitoxin may obstruct the toxin's RNA-binding groove, blocking access to the active sites. Additionally, the C-terminal arginine of the antitoxin may remove Mg(2+) ions from the toxin active sites. The chain is Antitoxin VapB2 (vapB2) from Mycobacterium tuberculosis (strain ATCC 25618 / H37Rv).